The primary structure comprises 313 residues: Ribosomal RNA small subunit methyltransferase H (313 aa).

S-adenosyl-L-methionine is bound by residues 33–35 (GGH), aspartate 53, phenylalanine 80, aspartate 101, and glutamine 108. The interval 282 to 313 (LVHNKPLTPSEAEIEQNPRARSAKLRVAQKLA) is disordered.

It belongs to the methyltransferase superfamily. RsmH family.

The protein resides in the cytoplasm. The catalysed reaction is cytidine(1402) in 16S rRNA + S-adenosyl-L-methionine = N(4)-methylcytidine(1402) in 16S rRNA + S-adenosyl-L-homocysteine + H(+). Its function is as follows. Specifically methylates the N4 position of cytidine in position 1402 (C1402) of 16S rRNA. The chain is Ribosomal RNA small subunit methyltransferase H from Magnetococcus marinus (strain ATCC BAA-1437 / JCM 17883 / MC-1).